We begin with the raw amino-acid sequence, 1086 residues long: Rh5-interacting protein (1086 aa).

The first 19 residues, 1–19 (MFRIFFTLLIIILIKKTSA), serve as a signal peptide directing secretion. N-linked (GlcNAc...) asparagine glycosylation is found at asparagine 103, asparagine 144, asparagine 228, asparagine 303, asparagine 334, asparagine 480, asparagine 498, asparagine 506, asparagine 526, and asparagine 646. EGF-like domains lie at 287–321 (RCTQDICSVNQFCDGENETCTCKTSLLPSAKNNCE) and 325–362 (LCTVLNCPENSTCEQIGNGKKAECKCENGKYYHNNKCY). EGF-like domains follow at residues 636–675 (SCSNLCNKCHNNSTCYGNRFNYDCFCDNPYISKYGNKLCE), 679–715 (DCESVLCSQNQVCQILPNDKLICQCEEGYKNVKGKCV), 719–753 (KCDLSCPSNKVCVIENGKQTCKCSERFVLENGVCI), 818–854 (YCKDINCKENEECSIVNFKPECVCKENLKKNNKGECI), 858–897 (SCLINEGNCPKDSKCIYREYKPHECVCNKQGHVAVNGKCV), 901–938 (KCVHNKKCSENSICVNVMNKEPICVCTYNYYKKDGVCL), and 942–979 (PCLKDNGGCSRNSECTFKYSKINCTCKENYKNKDDSCV). N-linked (GlcNAc...) asparagine glycans are attached at residues asparagine 964 and asparagine 1021.

In terms of assembly, component of the PfRH5 adhesion complex composed of 1 copy of CyRPA, RH5 and RIPR; the complex is formed during merozoite invasion of host erythrocytes specifically at the interface between the parasite and host membranes. Within the complex, interacts with CyRPA. CyRPA recruitment of RIPR to RH5-P113-BSG leads to the formation of the PfRH5 adhesion complex which probably in turn releases RH5 from P113 while maintaining the interaction of the PfRH5 adhesion complex with BSG. Post-translationally, proteolytically cleaved into two chains of 125kDa and 65kDa which remain associated. The cleavage occurs at the schizont stage prior to the release of merozoites. In terms of processing, contains disulfide bonds.

The protein localises to the secreted. It is found in the cytoplasmic vesicle. Its subcellular location is the secretory vesicle. The protein resides in the microneme lumen. It localises to the cell membrane. The protein localises to the host cell membrane. Essential for the invasion of host erythrocytes by blood stage merozoites. As part of the PfRH5 adhesion complex, facilitates the interaction of RH5 and human BSG required for the Ca(2+) release into the erythrocyte. This is Rh5-interacting protein (RIPR) from Plasmodium falciparum (isolate 3D7).